Here is a 161-residue protein sequence, read N- to C-terminus: MSLIIKSILNADAEARYFRPGELAQIKGFNASAASRLRLVQALTENRERIVKQSANQLFQKRPDIVSPGGNAYGQDMTATCLRDMDYYLRLITYSIVAGDSTPIQEIGVIGVREMYRSLGTPIEAVAESIRAMKYVATSMMSVEDRAEVDTYFDYLIGAMQ.

Asn-71 carries the N4-methylasparagine modification. Position 81 (Cys-81) interacts with (2R,3E)-phycocyanobilin.

Belongs to the phycobiliprotein family. As to quaternary structure, heterohexamer of two alpha chains, one alpha-B chain and three beta chains. Contains one covalently linked phycocyanobilin chromophore. The chromophore is added by phycocyanobilin lyase CpcS 1.

The protein resides in the cellular thylakoid membrane. Its function is as follows. Light-harvesting photosynthetic bile pigment-protein from the phycobiliprotein complex. Allophycocyanin has a maximum absorption at approximately 650 to 653 nanometers. The chain is Putative allophycocyanin subunit alpha 2 (apcA2) from Nostoc sp. (strain PCC 7120 / SAG 25.82 / UTEX 2576).